Reading from the N-terminus, the 154-residue chain is MHCPFCGANDTKVIDSRLVAEGEQVRRRRECVACGERFTTFETAELVLPRLIKQDGTRQPFDEEKLRAGMQRALEKRPVSVERLEAALAHIKSRLRATGEREVKSLVVGEMVMAELRKLDEVAYIRFASVYRRFQDLDEFREEIDRLAREPARE.

A zinc finger spans residues 3-34 (CPFCGANDTKVIDSRLVAEGEQVRRRRECVAC). The 91-residue stretch at 49–139 (PRLIKQDGTR…VYRRFQDLDE (91 aa)) folds into the ATP-cone domain.

It belongs to the NrdR family. Zn(2+) is required as a cofactor.

In terms of biological role, negatively regulates transcription of bacterial ribonucleotide reductase nrd genes and operons by binding to NrdR-boxes. The sequence is that of Transcriptional repressor NrdR from Pseudomonas putida (strain GB-1).